Reading from the N-terminus, the 385-residue chain is Chaperone protein DnaJ (385 aa).

Residues 5–70 (DYYEVLGVSK…DKKAAYDRFG (66 aa)) form the J domain. Residues 143 to 221 (GLSKQITVPS…CGGAGRQEKD (79 aa)) form a CR-type zinc finger. Residues Cys-156, Cys-159, Cys-173, Cys-176, Cys-195, Cys-198, Cys-209, and Cys-212 each coordinate Zn(2+). CXXCXGXG motif repeat units lie at residues 156 to 163 (CSSCDGTG), 173 to 180 (CPTCSGMG), 195 to 202 (CPTCNGMG), and 209 to 216 (CRTCGGAG). The tract at residues 299 to 323 (GGRSRVRVPEGSQSGRQMRLRGKGM) is disordered.

The protein belongs to the DnaJ family. As to quaternary structure, homodimer. It depends on Zn(2+) as a cofactor.

The protein resides in the cytoplasm. In terms of biological role, participates actively in the response to hyperosmotic and heat shock by preventing the aggregation of stress-denatured proteins and by disaggregating proteins, also in an autonomous, DnaK-independent fashion. Unfolded proteins bind initially to DnaJ; upon interaction with the DnaJ-bound protein, DnaK hydrolyzes its bound ATP, resulting in the formation of a stable complex. GrpE releases ADP from DnaK; ATP binding to DnaK triggers the release of the substrate protein, thus completing the reaction cycle. Several rounds of ATP-dependent interactions between DnaJ, DnaK and GrpE are required for fully efficient folding. Also involved, together with DnaK and GrpE, in the DNA replication of plasmids through activation of initiation proteins. This Jannaschia sp. (strain CCS1) protein is Chaperone protein DnaJ.